Reading from the N-terminus, the 153-residue chain is UPF0260 protein YcgN (153 aa).

This sequence belongs to the UPF0260 family.

This Salmonella dublin (strain CT_02021853) protein is UPF0260 protein YcgN.